We begin with the raw amino-acid sequence, 229 residues long: NADH dehydrogenase [ubiquinone] iron-sulfur protein 8, mitochondrial (229 aa).

A mitochondrion-targeting transit peptide spans 1 to 41 (MAAILARKSLSALRSRQLVLAGHTIEGTNGYNRTLLGTRSF). 2 4Fe-4S ferredoxin-type domains span residues 121–150 (RRYA…IEAE) and 160–189 (TRYD…EGPN). C130, C133, C136, C140, C169, C172, C175, and C179 together coordinate [4Fe-4S] cluster.

The protein belongs to the complex I 23 kDa subunit family. Complex I is composed of about 45 different subunits. This is a component of the iron-sulfur (IP) fragment of the enzyme. The cofactor is [4Fe-4S] cluster. In terms of tissue distribution, lowest expression found in storage tissues of tubers. Higher expression in older leaves than younger ones. Highest expression found in flowers.

The protein resides in the mitochondrion inner membrane. The enzyme catalyses a ubiquinone + NADH + 5 H(+)(in) = a ubiquinol + NAD(+) + 4 H(+)(out). In terms of biological role, core subunit of the mitochondrial membrane respiratory chain NADH dehydrogenase (Complex I) that is believed to belong to the minimal assembly required for catalysis. Complex I functions in the transfer of electrons from NADH to the respiratory chain. The immediate electron acceptor for the enzyme is believed to be ubiquinone. May donate electrons to ubiquinone. This chain is NADH dehydrogenase [ubiquinone] iron-sulfur protein 8, mitochondrial, found in Solanum tuberosum (Potato).